We begin with the raw amino-acid sequence, 321 residues long: tRNA U34 carboxymethyltransferase (321 aa).

Residues Lys-90, Trp-104, Lys-109, Gly-129, 151 to 153 (DPT), 180 to 181 (IE), Met-195, Tyr-199, and Arg-314 each bind carboxy-S-adenosyl-L-methionine.

The protein belongs to the class I-like SAM-binding methyltransferase superfamily. CmoB family. Homotetramer.

It catalyses the reaction carboxy-S-adenosyl-L-methionine + 5-hydroxyuridine(34) in tRNA = 5-carboxymethoxyuridine(34) in tRNA + S-adenosyl-L-homocysteine + H(+). In terms of biological role, catalyzes carboxymethyl transfer from carboxy-S-adenosyl-L-methionine (Cx-SAM) to 5-hydroxyuridine (ho5U) to form 5-carboxymethoxyuridine (cmo5U) at position 34 in tRNAs. This chain is tRNA U34 carboxymethyltransferase, found in Pasteurella multocida (strain Pm70).